A 377-amino-acid polypeptide reads, in one-letter code: L-arabinitol 4-dehydrogenase (377 aa).

Residues cysteine 66, histidine 91, glutamate 92, cysteine 121, cysteine 124, cysteine 127, cysteine 135, and glutamate 176 each contribute to the Zn(2+) site. Residues proline 203–isoleucine 204, aspartate 224, arginine 229, isoleucine 296, and glutamine 320–arginine 322 each bind NAD(+).

Belongs to the zinc-containing alcohol dehydrogenase family. As to quaternary structure, homotetramer. Zn(2+) serves as cofactor. The N-terminus is blocked.

The catalysed reaction is L-arabinitol + NAD(+) = L-xylulose + NADH + H(+). Its pathway is carbohydrate degradation; L-arabinose degradation via L-arabinitol; D-xylulose 5-phosphate from L-arabinose (fungal route): step 2/5. Its function is as follows. Catalyzes the NAD-dependent oxidation of L-arabinitol to L-xylulose in the fungal L-arabinose catabolic pathway. L-arabinose catabolism is important for using plant material as a carbon source. Can partially compensate for xylitol dehydrogenase in xdh1 mutants. Also oxidizes galactitol to L-xylo-3-hexulose as an alternative to the standard Leloir pathway for D-galactose metabolism. NADP cannot act as a cosubstrate. This Hypocrea jecorina (Trichoderma reesei) protein is L-arabinitol 4-dehydrogenase (lad1).